A 425-amino-acid chain; its full sequence is Adenylosuccinate synthetase (425 aa).

Residues 12–18 (GDEGKAK) and 40–42 (GHT) each bind GTP. Asp-13 functions as the Proton acceptor in the catalytic mechanism. The Mg(2+) site is built by Asp-13 and Gly-40. IMP is bound by residues 13–16 (DEGK), 38–41 (NAGH), Thr-130, Arg-144, Gln-224, Thr-239, and Arg-303. The Proton donor role is filled by His-41. Residue 299-305 (ATTGRPR) coordinates substrate. GTP contacts are provided by residues Arg-305, 331-333 (KID), and 411-413 (STG).

The protein belongs to the adenylosuccinate synthetase family. Homodimer. Requires Mg(2+) as cofactor.

It is found in the cytoplasm. It carries out the reaction IMP + L-aspartate + GTP = N(6)-(1,2-dicarboxyethyl)-AMP + GDP + phosphate + 2 H(+). It participates in purine metabolism; AMP biosynthesis via de novo pathway; AMP from IMP: step 1/2. Plays an important role in the de novo pathway of purine nucleotide biosynthesis. Catalyzes the first committed step in the biosynthesis of AMP from IMP. This chain is Adenylosuccinate synthetase, found in Leptospira interrogans serogroup Icterohaemorrhagiae serovar copenhageni (strain Fiocruz L1-130).